The chain runs to 137 residues: uncharacterized protein (137 aa).

This is an uncharacterized protein from Frog virus 3 (isolate Goorha) (FV-3).